The following is a 237-amino-acid chain: Ribose-5-phosphate isomerase A (237 aa).

Residues 28–31 (SGST), 83–86 (DGAD), and 97–100 (KGRG) contribute to the substrate site. Glu-106 functions as the Proton acceptor in the catalytic mechanism. Lys-124 contacts substrate.

The protein belongs to the ribose 5-phosphate isomerase family. Homodimer.

It carries out the reaction aldehydo-D-ribose 5-phosphate = D-ribulose 5-phosphate. Its pathway is carbohydrate degradation; pentose phosphate pathway; D-ribose 5-phosphate from D-ribulose 5-phosphate (non-oxidative stage): step 1/1. Catalyzes the reversible conversion of ribose-5-phosphate to ribulose 5-phosphate. The protein is Ribose-5-phosphate isomerase A of Thermomicrobium roseum (strain ATCC 27502 / DSM 5159 / P-2).